Reading from the N-terminus, the 228-residue chain is Sec-independent protein translocase protein TatB (228 aa).

A helical membrane pass occupies residues 1-21 (MFDFGLGELVFVGIIALIVLG). Disordered regions lie at residues 126 to 162 (LSDGISDVMPSERSDTSAEILGDSGQTGSTAEPAETD) and 196 to 228 (VPHTTSLRKQAISRKRGLRPKHRAKPKLRVRKS). Residues 206–228 (AISRKRGLRPKHRAKPKLRVRKS) are compositionally biased toward basic residues.

Belongs to the TatB family. The Tat system comprises two distinct complexes: a TatABC complex, containing multiple copies of TatA, TatB and TatC subunits, and a separate TatA complex, containing only TatA subunits. Substrates initially bind to the TatABC complex, which probably triggers association of the separate TatA complex to form the active translocon.

The protein localises to the cell inner membrane. Part of the twin-arginine translocation (Tat) system that transports large folded proteins containing a characteristic twin-arginine motif in their signal peptide across membranes. Together with TatC, TatB is part of a receptor directly interacting with Tat signal peptides. TatB may form an oligomeric binding site that transiently accommodates folded Tat precursor proteins before their translocation. The polypeptide is Sec-independent protein translocase protein TatB (Neisseria meningitidis serogroup C / serotype 2a (strain ATCC 700532 / DSM 15464 / FAM18)).